A 543-amino-acid polypeptide reads, in one-letter code: Carboxypeptidase Y homolog A (543 aa).

Positions 1-17 (MRVLPATLLVGAATAAA) are cleaved as a signal peptide. A propeptide spanning residues 18 to 124 (PPFQQILGLP…KLEAYDLRVK (107 aa)) is cleaved from the precursor. Cystine bridges form between Cys-179–Cys-419, Cys-313–Cys-327, Cys-337–Cys-360, Cys-344–Cys-353, and Cys-382–Cys-389. N-linked (GlcNAc...) asparagine glycosylation is present at Asn-210. Residue Ser-266 is part of the active site. Residue Asp-458 is part of the active site. N-linked (GlcNAc...) asparagine glycosylation occurs at Asn-509. His-520 is an active-site residue.

This sequence belongs to the peptidase S10 family.

The protein resides in the vacuole. The catalysed reaction is Release of a C-terminal amino acid with broad specificity.. Vacuolar carboxypeptidase involved in degradation of small peptides. Digests preferentially peptides containing an aliphatic or hydrophobic residue in P1' position, as well as methionine, leucine or phenylalanine in P1 position of ester substrate. This is Carboxypeptidase Y homolog A (cpyA) from Aspergillus fumigatus (strain ATCC MYA-4609 / CBS 101355 / FGSC A1100 / Af293) (Neosartorya fumigata).